Reading from the N-terminus, the 229-residue chain is Histone H3-like centromeric protein CSE4 (229 aa).

Residues 1–35 show a composition bias toward polar residues; sequence MSSKQQWVSSAIQSDSSGRSLSNVNRLAGDQQSIN. Positions 1 to 78 are disordered; it reads MSSKQQWVSS…DIETDYEDQA (78 aa). Over residues 53–68 the composition is skewed to basic and acidic residues; it reads PRREERRRYESSKSDL. Residues 115-132 carry the Nuclear localization signal motif; sequence KRREKQRKQSLKRVEKKY. The segment at 132 to 229 is H3-like; the sequence is YTPSELALYE…LARRIRGQFI (98 aa).

This sequence belongs to the histone H3 family. As to quaternary structure, component of centromeric nucleosomes, where DNA is wrapped around a histone octamer core. The octamer contains two molecules each of H2A, H2B, CSE4/CENPA and H4 assembled in one CSE4-H4 heterotetramer and two H2A-H2B heterodimers. Interacts with the inner kinetochore. Interacts with the central kinetochore protein CTF19. Interacts with YTA7. Ubiquitinated. Is degraded through ubiquitin-mediated proteolysis when not protected by its association to the kinetochore.

The protein resides in the nucleus. The protein localises to the chromosome. It localises to the centromere. Histone H3-like nucleosomal protein that is specifically found in centromeric nucleosomes. Replaces conventional H3 in the nucleosome core of centromeric chromatin that serves as an assembly site for the inner kinetochore. Required for recruitment and assembly of kinetochore proteins, mitotic progression and chromosome segregation. May serve as an epigenetic mark that propagates centromere identity through replication and cell division. Required for functional chromatin architecture at the yeast 2-micron circle partitioning locus and promotes equal plasmid segregation. This chain is Histone H3-like centromeric protein CSE4 (CSE4), found in Saccharomyces cerevisiae (strain ATCC 204508 / S288c) (Baker's yeast).